The chain runs to 562 residues: Urocanate hydratase (562 aa).

NAD(+)-binding positions include 52–53, Gln-130, 176–178, Glu-196, Arg-201, 242–243, 263–267, 273–274, and Tyr-322; these read GG, GMG, NA, QTSAH, and YL. Residue Cys-410 is part of the active site. Gly-492 lines the NAD(+) pocket.

This sequence belongs to the urocanase family. NAD(+) is required as a cofactor.

It localises to the cytoplasm. The enzyme catalyses 4-imidazolone-5-propanoate = trans-urocanate + H2O. Its pathway is amino-acid degradation; L-histidine degradation into L-glutamate; N-formimidoyl-L-glutamate from L-histidine: step 2/3. In terms of biological role, catalyzes the conversion of urocanate to 4-imidazolone-5-propionate. This Klebsiella pneumoniae (strain 342) protein is Urocanate hydratase.